The following is a 163-amino-acid chain: uncharacterized protein (163 aa).

The protein belongs to the mimivirus L242/L243 family.

This is an uncharacterized protein from Acanthamoeba polyphaga (Amoeba).